The primary structure comprises 128 residues: Protein BEX2 (128 aa).

A disordered region spans residues Met-1 to Gly-44. The segment covering Glu-20–Lys-33 has biased composition (basic and acidic residues). Arg-50 bears the Omega-N-methylarginine mark. The disordered stretch occupies residues Gln-103–Pro-128. Residues Pro-115 to Pro-128 are compositionally biased toward basic and acidic residues. A his cluster region spans residues His-117 to Asn-121. Cys-125 contributes to the Zn(2+) binding site.

This sequence belongs to the BEX family. Interacts with LMO2, possibly leading to regulate the transcriptional activity of a DNA-binding complex containing LMO2. Interacts with OMP.

The protein resides in the cytoplasm. It is found in the nucleus. Functionally, regulator of mitochondrial apoptosis and G1 cell cycle. Regulates the level of PP2A regulatory subunit B and PP2A phosphatase activity. In absence of reductive stress, acts as a pseudosubstrate for the CRL2(FEM1B) complex: associates with FEM1B via zinc, thereby preventing association between FEM1B and its substrates. This Bos taurus (Bovine) protein is Protein BEX2 (BEX2).